A 270-amino-acid chain; its full sequence is Regulatory protein RecX (270 aa).

This sequence belongs to the RecX family.

It is found in the cytoplasm. Functionally, modulates RecA activity. The sequence is that of Regulatory protein RecX from Bacillus cereus (strain 03BB102).